Here is an 893-residue protein sequence, read N- to C-terminus: UPF0182 protein CLI_0022 (893 aa).

7 consecutive transmembrane segments (helical) span residues 9–29, 49–69, 94–114, 154–174, 202–222, 246–266, and 273–293; these read IPLF…NFII, AIII…WMYY, LFFI…SSSY, VIIS…FILE, LAIV…IKIW, FYKI…LSIV, and VSIC…ASFL.

The protein belongs to the UPF0182 family.

It localises to the cell membrane. The sequence is that of UPF0182 protein CLI_0022 from Clostridium botulinum (strain Langeland / NCTC 10281 / Type F).